A 324-amino-acid polypeptide reads, in one-letter code: Putative ribose-phosphate pyrophosphokinase 1 (324 aa).

Residues 43-45 (DGE) and 102-103 (RQ) each bind ATP. His-136 provides a ligand contact to Mg(2+). Residues Asp-225 and 229–233 (NTGQT) each bind D-ribose 5-phosphate.

Belongs to the ribose-phosphate pyrophosphokinase family. Class I subfamily. In terms of assembly, homohexamer. Mg(2+) is required as a cofactor.

It localises to the cytoplasm. The enzyme catalyses D-ribose 5-phosphate + ATP = 5-phospho-alpha-D-ribose 1-diphosphate + AMP + H(+). The protein operates within metabolic intermediate biosynthesis; 5-phospho-alpha-D-ribose 1-diphosphate biosynthesis; 5-phospho-alpha-D-ribose 1-diphosphate from D-ribose 5-phosphate (route I): step 1/1. Functionally, involved in the biosynthesis of the central metabolite phospho-alpha-D-ribosyl-1-pyrophosphate (PRPP) via the transfer of pyrophosphoryl group from ATP to 1-hydroxyl of ribose-5-phosphate (Rib-5-P). In Enterococcus faecalis (strain ATCC 700802 / V583), this protein is Putative ribose-phosphate pyrophosphokinase 1.